The chain runs to 480 residues: Protein nucleotidyltransferase YdiU (480 aa).

ATP-binding residues include glycine 86, glycine 88, arginine 89, lysine 109, aspartate 121, glycine 122, arginine 172, and arginine 179. Residue aspartate 248 is the Proton acceptor of the active site. Mg(2+) is bound by residues asparagine 249 and aspartate 258. Residue aspartate 258 coordinates ATP.

The protein belongs to the SELO family. Requires Mg(2+) as cofactor. The cofactor is Mn(2+).

It carries out the reaction L-seryl-[protein] + ATP = 3-O-(5'-adenylyl)-L-seryl-[protein] + diphosphate. The catalysed reaction is L-threonyl-[protein] + ATP = 3-O-(5'-adenylyl)-L-threonyl-[protein] + diphosphate. The enzyme catalyses L-tyrosyl-[protein] + ATP = O-(5'-adenylyl)-L-tyrosyl-[protein] + diphosphate. It catalyses the reaction L-histidyl-[protein] + UTP = N(tele)-(5'-uridylyl)-L-histidyl-[protein] + diphosphate. It carries out the reaction L-seryl-[protein] + UTP = O-(5'-uridylyl)-L-seryl-[protein] + diphosphate. The catalysed reaction is L-tyrosyl-[protein] + UTP = O-(5'-uridylyl)-L-tyrosyl-[protein] + diphosphate. Its function is as follows. Nucleotidyltransferase involved in the post-translational modification of proteins. It can catalyze the addition of adenosine monophosphate (AMP) or uridine monophosphate (UMP) to a protein, resulting in modifications known as AMPylation and UMPylation. The protein is Protein nucleotidyltransferase YdiU of Salmonella paratyphi A (strain ATCC 9150 / SARB42).